The primary structure comprises 216 residues: Probable GTP-binding protein EngB (216 aa).

One can recognise an EngB-type G domain in the interval 27–201; it reads EGIEVAFAGR…REKLDTWFSE (175 aa). GTP-binding positions include 35–42, 62–66, 80–83, 147–150, and 180–182; these read GRSNAGKS, GRTQL, DLPG, TKAD, and FSS. Residues S42 and T64 each contribute to the Mg(2+) site.

This sequence belongs to the TRAFAC class TrmE-Era-EngA-EngB-Septin-like GTPase superfamily. EngB GTPase family. Requires Mg(2+) as cofactor.

In terms of biological role, necessary for normal cell division and for the maintenance of normal septation. The polypeptide is Probable GTP-binding protein EngB (Yersinia pestis bv. Antiqua (strain Angola)).